The primary structure comprises 190 residues: Photosynthetic NDH subunit of lumenal location 2, chloroplastic (190 aa).

A chloroplast-targeting transit peptide spans 1-31; sequence MSSFTTTNTPPPYLLRKIYHRRVNQPFSVVC. Residues 32 to 68 constitute a thylakoid transit peptide; sequence CTGEPQQDIFTRRRTLTSLITFTVIGGATSSALAQEK. Coiled coils occupy residues 87–107 and 139–159; these read EDAAARIKQTAEGLRDMREML and ESRRNDYVQAANELVENMSEL.

It belongs to the PsbQ family. As to quaternary structure, part of the chloroplast NDH complex, composed of a mixture of chloroplast and nucleus encoded subunits. Component of the NDH lumenal subcomplex, at least composed of PnsL1, PnsL2, PnsL3, PnsL4 and PnsL5.

The protein resides in the plastid. The protein localises to the chloroplast thylakoid membrane. NDH shuttles electrons from NAD(P)H:plastoquinone, via FMN and iron-sulfur (Fe-S) centers, to quinones in the photosynthetic chain and possibly in a chloroplast respiratory chain. The immediate electron acceptor for the enzyme in this species is believed to be plastoquinone. Couples the redox reaction to proton translocation, and thus conserves the redox energy in a proton gradient. Required for both formation and activity of the chloroplast NAD(P)H dehydrogenase (NDH) complex. In Arabidopsis thaliana (Mouse-ear cress), this protein is Photosynthetic NDH subunit of lumenal location 2, chloroplastic.